The sequence spans 1460 residues: Cilia- and flagella-associated protein 43 (1460 aa).

WD repeat units lie at residues 46–87 (EGRY…HLQC), 91–132 (VATV…RLVK), 184–221 (SKGH…MKNY), 303–342 (RRRS…AGHT), 428–468 (IFAC…DSAS), 529–569 (MRDH…MKLP), 589–628 (FGRG…IHYS), 911–951 (EIDP…VTEV), and 1129–1170 (NRRF…CRAV). 2 coiled-coil regions span residues 1170–1214 (VVEA…AEEA) and 1399–1446 (LGEH…LREA).

It belongs to the CFAP43 family.

The protein resides in the cell projection. The protein localises to the cilium. It is found in the flagellum. Its subcellular location is the cytoplasm. It localises to the cytoskeleton. The protein resides in the flagellum axoneme. Its function is as follows. Flagellar protein involved in flagellum axoneme organization and function. This chain is Cilia- and flagella-associated protein 43, found in Trypanosoma brucei brucei (strain 927/4 GUTat10.1).